The following is a 338-amino-acid chain: Glycerol-3-phosphate dehydrogenase [NAD(P)+] (338 aa).

NADPH contacts are provided by Ser-13, Trp-14, and Lys-108. Sn-glycerol 3-phosphate is bound by residues Lys-108, Gly-139, and Ser-141. Ala-143 lines the NADPH pocket. The sn-glycerol 3-phosphate site is built by Lys-194, Asp-247, Ser-257, Arg-258, and Asn-259. Lys-194 (proton acceptor) is an active-site residue. Arg-258 is a binding site for NADPH. 2 residues coordinate NADPH: Val-282 and Glu-284.

The protein belongs to the NAD-dependent glycerol-3-phosphate dehydrogenase family.

It localises to the cytoplasm. It carries out the reaction sn-glycerol 3-phosphate + NAD(+) = dihydroxyacetone phosphate + NADH + H(+). The catalysed reaction is sn-glycerol 3-phosphate + NADP(+) = dihydroxyacetone phosphate + NADPH + H(+). It participates in membrane lipid metabolism; glycerophospholipid metabolism. Its function is as follows. Catalyzes the reduction of the glycolytic intermediate dihydroxyacetone phosphate (DHAP) to sn-glycerol 3-phosphate (G3P), the key precursor for phospholipid synthesis. The protein is Glycerol-3-phosphate dehydrogenase [NAD(P)+] of Streptococcus pneumoniae (strain Taiwan19F-14).